The chain runs to 438 residues: MAMSLIQACCSLALSTWLLSFCFVHLLCLDFTVAEKEEWYTAFVNITYAEPAPDPGAGAAGGGGAELHTEKTECGRYGEHSPKQDARGEVVMASSAHDRLACDPNTKFAAPTRGKNWIALIPKGNCTYRDKIRNAFLQNASAVVIFNVGSNTNETITMPHAGVEDIVAIMIPEPKGKEIVSLLERNITVTMYITIGTRNLQKYVSRTSVVFVSISFIVLMIISLAWLVFYYIQRFRYANARDRNQRRLGDAAKKAISKLQIRTIKKGDKETESDFDNCAVCIEGYKPNDVVRILPCRHLFHKSCVDPWLLDHRTCPMCKMNILKALGIPPNADCMDDLPTDFEGSLGGPPTNQITGASDTTVNESSVTLDPAVRTVGALQVVQDTDPIPQEGDVIFTTNSEQEPAVSSDSDISLIMAMEVGLSDVELSTDQDCEEVKS.

The signal sequence occupies residues 1–34 (MAMSLIQACCSLALSTWLLSFCFVHLLCLDFTVA). Residues 35–208 (EKEEWYTAFV…NLQKYVSRTS (174 aa)) are Extracellular-facing. N-linked (GlcNAc...) asparagine glycosylation is found at Asn45, Asn125, Asn153, and Asn186. The PA domain occupies 81 to 183 (SPKQDARGEV…PKGKEIVSLL (103 aa)). Residues 209 to 229 (VVFVSISFIVLMIISLAWLVF) traverse the membrane as a helical segment. The Cytoplasmic portion of the chain corresponds to 230–438 (YYIQRFRYAN…TDQDCEEVKS (209 aa)). Residues 278 to 319 (CAVCIEGYKPNDVVRILPCRHLFHKSCVDPWLLDHRTCPMCK) form an RING-type; atypical zinc finger.

The protein localises to the membrane. The chain is RING finger protein 150 (RNF150) from Homo sapiens (Human).